Here is a 378-residue protein sequence, read N- to C-terminus: Acetylornithine deacetylase (378 aa).

Residue His76 coordinates Zn(2+). Residue Asp78 is part of the active site. Zn(2+) is bound at residue Asp108. Glu140 is a catalytic residue. 3 residues coordinate Zn(2+): Glu141, Glu165, and His351.

It belongs to the peptidase M20A family. ArgE subfamily. As to quaternary structure, homodimer. Requires Zn(2+) as cofactor. Co(2+) is required as a cofactor. Glutathione serves as cofactor.

Its subcellular location is the cytoplasm. It carries out the reaction N(2)-acetyl-L-ornithine + H2O = L-ornithine + acetate. Its pathway is amino-acid biosynthesis; L-arginine biosynthesis; L-ornithine from N(2)-acetyl-L-ornithine (linear): step 1/1. Its function is as follows. Catalyzes the hydrolysis of the amide bond of N(2)-acetylated L-amino acids. Cleaves the acetyl group from N-acetyl-L-ornithine to form L-ornithine, an intermediate in L-arginine biosynthesis pathway, and a branchpoint in the synthesis of polyamines. This chain is Acetylornithine deacetylase, found in Vibrio vulnificus (strain CMCP6).